A 26-amino-acid polypeptide reads, in one-letter code: Conotoxin Eb6.15 (26 aa).

Cystine bridges form between cysteine 7–cysteine 18 and cysteine 13–cysteine 25.

This sequence belongs to the conotoxin O1 superfamily. Expressed by the venom duct.

The protein localises to the secreted. This chain is Conotoxin Eb6.15 (E1), found in Conus ebraeus (Hebrew cone).